The primary structure comprises 325 residues: MIKLLYPKFWQKRNIIAYLLLPIGLIYKFLGYLRDSLARPIMLPAKVICVGNCSVGGTGKTQIVMYLAKLLRAKNVSFVIVTKAYGSNLKSATTIHPGHTALEVGDEGVILAKYGTVIATKNIKEILPLINELKPDIIIIDDFLQNPYFYKDFTIVSVDSQRLFGNGFLIPAGPLRQDPNKALDAADLIFLVSSTNDKIPNILTPYVNKVISAQIVPSNNIDKTKNYFAFSGIGNPERFFSTLKNYGLNITGYKIFPDHYNYLQEDLENLYSLAKEHNTTLITTRKDHIKFNDLNNNIVCLDVELSINNHDLLNEKIFKKAQIFN.

Position 54–61 (54–61 (SVGGTGKT)) interacts with ATP.

It belongs to the LpxK family.

It catalyses the reaction a lipid A disaccharide + ATP = a lipid IVA + ADP + H(+). It participates in glycolipid biosynthesis; lipid IV(A) biosynthesis; lipid IV(A) from (3R)-3-hydroxytetradecanoyl-[acyl-carrier-protein] and UDP-N-acetyl-alpha-D-glucosamine: step 6/6. Its function is as follows. Transfers the gamma-phosphate of ATP to the 4'-position of a tetraacyldisaccharide 1-phosphate intermediate (termed DS-1-P) to form tetraacyldisaccharide 1,4'-bis-phosphate (lipid IVA). This is Tetraacyldisaccharide 4'-kinase from Rickettsia akari (strain Hartford).